Reading from the N-terminus, the 316-residue chain is BTB/POZ domain-containing protein Y57A10B.3 (316 aa).

Residues 1-21 form the signal peptide; it reads MSAMRRCTCFIICLLTSYTYG. Residues Asn91, Asn107, Asn118, Asn133, Asn191, and Asn260 are each glycosylated (N-linked (GlcNAc...) asparagine). Residues 158-226 form the BTB domain; it reads RDAVLIVEGK…VHSTATFPND (69 aa).

The protein localises to the secreted. The protein is BTB/POZ domain-containing protein Y57A10B.3 (btb-14) of Caenorhabditis elegans.